Here is a 181-residue protein sequence, read N- to C-terminus: Heavy metal-associated isoprenylated plant protein 46 (181 aa).

In terms of domain architecture, HMA spans 2–71 (KQKILIRVTM…KVAFAELVSV (70 aa)). The interval 74-121 (VEPPKKEDEKKGGDGKGAEGKGGDQKGGDKKGPDDKEPPEPKPVPCYP) is disordered. A compositionally biased stretch (basic and acidic residues) spans 75–113 (EPPKKEDEKKGGDGKGAEGKGGDQKGGDKKGPDDKEPPE). Residue cysteine 178 is modified to Cysteine methyl ester. Cysteine 178 carries the S-farnesyl cysteine lipid modification. Positions 179–181 (KIM) are cleaved as a propeptide — removed in mature form.

Belongs to the HIPP family.

Functionally, probable heavy-metal-binding protein. The chain is Heavy metal-associated isoprenylated plant protein 46 from Arabidopsis thaliana (Mouse-ear cress).